Consider the following 433-residue polypeptide: Glutamate-1-semialdehyde 2,1-aminomutase (433 aa).

Lys266 bears the N6-(pyridoxal phosphate)lysine mark.

The protein belongs to the class-III pyridoxal-phosphate-dependent aminotransferase family. HemL subfamily. In terms of assembly, homodimer. Requires pyridoxal 5'-phosphate as cofactor.

The protein localises to the cytoplasm. The catalysed reaction is (S)-4-amino-5-oxopentanoate = 5-aminolevulinate. The protein operates within porphyrin-containing compound metabolism; protoporphyrin-IX biosynthesis; 5-aminolevulinate from L-glutamyl-tRNA(Glu): step 2/2. This is Glutamate-1-semialdehyde 2,1-aminomutase from Psychrobacter arcticus (strain DSM 17307 / VKM B-2377 / 273-4).